Here is a 938-residue protein sequence, read N- to C-terminus: Isoleucine--tRNA ligase (938 aa).

Residues 58–68 carry the 'HIGH' region motif; that stretch reads PYANGHIHLGT. Residue Glu565 coordinates L-isoleucyl-5'-AMP. Positions 606–610 match the 'KMSKS' region motif; the sequence is KMSKS. Lys609 lines the ATP pocket. Zn(2+)-binding residues include Cys905, Cys908, Cys925, and Cys928.

It belongs to the class-I aminoacyl-tRNA synthetase family. IleS type 1 subfamily. As to quaternary structure, monomer. Zn(2+) serves as cofactor.

The protein resides in the cytoplasm. It catalyses the reaction tRNA(Ile) + L-isoleucine + ATP = L-isoleucyl-tRNA(Ile) + AMP + diphosphate. Catalyzes the attachment of isoleucine to tRNA(Ile). As IleRS can inadvertently accommodate and process structurally similar amino acids such as valine, to avoid such errors it has two additional distinct tRNA(Ile)-dependent editing activities. One activity is designated as 'pretransfer' editing and involves the hydrolysis of activated Val-AMP. The other activity is designated 'posttransfer' editing and involves deacylation of mischarged Val-tRNA(Ile). This Nitratidesulfovibrio vulgaris (strain DSM 19637 / Miyazaki F) (Desulfovibrio vulgaris) protein is Isoleucine--tRNA ligase.